Reading from the N-terminus, the 288-residue chain is Mortality factor 4-like protein 2 (288 aa).

A compositionally biased stretch (polar residues) spans 1–15 (MSSRKQASQTRGQQS). Residues 1–115 (MSSRKQASQT…DPTVESEEAF (115 aa)) form a disordered region. S71 carries the phosphoserine modification. In terms of domain architecture, MRG spans 117 to 288 (SRMEVKVKIP…ASADYHRKAL (172 aa)).

Component of the NuA4 histone acetyltransferase complex which contains the catalytic subunit KAT5/TIP60 and the subunits EP400, TRRAP/PAF400, BRD8/SMAP, EPC1, DMAP1/DNMAP1, RUVBL1/TIP49, RUVBL2, ING3, actin, ACTL6A/BAF53A, MORF4L1/MRG15, MORF4L2/MRGX, MRGBP, YEATS4/GAS41 and VPS72/YL1. The NuA4 complex interacts with MYC and the adenovirus E1A protein. MORF4L1 may also participate in the formation of NuA4 related complexes which lack the KAT5/TIP60 catalytic subunit, but which include the SWI/SNF related protein SRCAP. Component of the MSIN3A histone deacetylase complex, which includes SIN3A, HDAC2, ARID4B, MORF4L1, RBBP4/RbAp48, and RBBP7/RbAp46. Interacts with MRFAP1 and RB1. May also interact with one or more as yet undefined members of the TLE (transducin-like enhancer of split) family of transcriptional repressors.

The protein resides in the nucleus. Its function is as follows. Component of the NuA4 histone acetyltransferase complex which is involved in transcriptional activation of select genes principally by acetylation of nucleosomal histone H4 and H2A. This modification may both alter nucleosome - DNA interactions and promote interaction of the modified histones with other proteins which positively regulate transcription. This complex may be required for the activation of transcriptional programs associated with oncogene and proto-oncogene mediated growth induction, tumor suppressor mediated growth arrest and replicative senescence, apoptosis, and DNA repair. The NuA4 complex ATPase and helicase activities seem to be, at least in part, contributed by the association of RUVBL1 and RUVBL2 with EP400. NuA4 may also play a direct role in DNA repair when directly recruited to sites of DNA damage. Also a component of the MSIN3A complex which acts to repress transcription by deacetylation of nucleosomal histones. The sequence is that of Mortality factor 4-like protein 2 (Morf4l2) from Mus musculus (Mouse).